The primary structure comprises 93 residues: Large ribosomal subunit protein uL23 (93 aa).

The protein belongs to the universal ribosomal protein uL23 family. Part of the 50S ribosomal subunit. Contacts protein L29, and trigger factor when it is bound to the ribosome.

In terms of biological role, one of the early assembly proteins it binds 23S rRNA. One of the proteins that surrounds the polypeptide exit tunnel on the outside of the ribosome. Forms the main docking site for trigger factor binding to the ribosome. The sequence is that of Large ribosomal subunit protein uL23 from Campylobacter fetus subsp. fetus (strain 82-40).